The sequence spans 199 residues: NAD(P)H-quinone oxidoreductase subunit 6, chloroplastic (199 aa).

The next 5 helical transmembrane spans lie at 13 to 33 (AILL…VLFT), 35 to 55 (IVYS…LYIL), 64 to 84 (VQIL…VMLI), 96 to 118 (WTVG…IAAI), and 157 to 177 (LPFE…ITMA).

It belongs to the complex I subunit 6 family. As to quaternary structure, NDH is composed of at least 16 different subunits, 5 of which are encoded in the nucleus.

The protein resides in the plastid. The protein localises to the chloroplast thylakoid membrane. It carries out the reaction a plastoquinone + NADH + (n+1) H(+)(in) = a plastoquinol + NAD(+) + n H(+)(out). The catalysed reaction is a plastoquinone + NADPH + (n+1) H(+)(in) = a plastoquinol + NADP(+) + n H(+)(out). NDH shuttles electrons from NAD(P)H:plastoquinone, via FMN and iron-sulfur (Fe-S) centers, to quinones in the photosynthetic chain and possibly in a chloroplast respiratory chain. The immediate electron acceptor for the enzyme in this species is believed to be plastoquinone. Couples the redox reaction to proton translocation, and thus conserves the redox energy in a proton gradient. This chain is NAD(P)H-quinone oxidoreductase subunit 6, chloroplastic (ndhG), found in Huperzia lucidula (Shining clubmoss).